Reading from the N-terminus, the 138-residue chain is Large ribosomal subunit protein uL16c (138 aa).

The disordered stretch occupies residues 1-21; sequence MLSPQKTKFRKQHRGRMKGVS. Basic residues predominate over residues 7 to 21; it reads TKFRKQHRGRMKGVS.

The protein belongs to the universal ribosomal protein uL16 family. Part of the 50S ribosomal subunit.

The protein resides in the plastid. It localises to the chloroplast. The chain is Large ribosomal subunit protein uL16c from Cycas taitungensis (Prince sago).